Consider the following 131-residue polypeptide: C-type natriuretic peptide 1 (131 aa).

The N-terminal stretch at 1–22 (MLYPALLCAALLLIAPLGHTEG) is a signal peptide. Positions 23 to 109 (RTLHPSPDAI…KRAVMDRSRR (87 aa)) are excised as a propeptide. Residues C115 and C131 are joined by a disulfide bond.

This sequence belongs to the natriuretic peptide family. As to expression, expressed in brain and to a low extent in atrium.

The protein localises to the secreted. Exhibits natriuretic and vasodepressant activity. Has a cGMP-stimulating activity. This is C-type natriuretic peptide 1 from Oncorhynchus mykiss (Rainbow trout).